Reading from the N-terminus, the 124-residue chain is Prefoldin subunit beta (124 aa).

It belongs to the prefoldin subunit beta family. As to quaternary structure, heterohexamer of two alpha and four beta subunits.

The protein resides in the cytoplasm. Molecular chaperone capable of stabilizing a range of proteins. Seems to fulfill an ATP-independent, HSP70-like function in archaeal de novo protein folding. This Thermoplasma volcanium (strain ATCC 51530 / DSM 4299 / JCM 9571 / NBRC 15438 / GSS1) protein is Prefoldin subunit beta (pfdB).